A 714-amino-acid polypeptide reads, in one-letter code: MPVRFKGLSEYQRNFLWKKSYLSESCNSSVGRKYPWAGLRSDQLGITKEPSFISKRRVPYHDPQISKSLEWNGAISESNVVASPEPEAPETPKSQEAEQKDVTQERVHSLEASRVPKRTRSHSADSRAEGASDVENNEGVTNHTPVNENVELEHSTKVLSENVDNGLDRLLRKKAGLTVVPSYNALRNSEYQRQFVWKTSKETAPAFAANQVFHNKSQFVPPFKGNSVIHETEYKRNFKGLSPVKEPKLRNDLRENRNLETVSPERKSNKIDDRLKLEAEMELKDLHQPKRKLTPWKHQRLGKVNSEYRAKFLSPAQYLYKAGAWTHVKGNMPNQVKELREKAEFYRKRVQGTHFSRDHLNQILSDSNCCWDVSSTTSSEGTVSSNIRALDLAGDPTSHKTLQKCPSTEPEEKGNIVEEQPQKNTTEKLGVSAPTIPVRRRLAWDTENTSEDVQKQPGEKEEEDDNEEEGDRKTGKQAFMGEQEKLDVREKSKADKMKEGSDSSVSSEKGGRLPTPKLRELGGIQRTHHDLTTPAVGGAVLVSPSKMKPPAPEQRKRMTSQDCLETSKNDFTKKESRAVSLLTSPAAGIKTVDPLPLREDSEDNIHKFAEATLPVSKIPKYPTNPPGQLPSPPHVPSYWHPSRRIQGSLRDPEFQHNVGKARMNNLQLPQHEAFNDEDEDRLSEISARSAASSLRAFQTLARAKKRKENFWGKT.

The short motif at 9–15 (SEYQRNF) is the ST]-E-Y-X(3)-F motif 1; required for efficient microtubule binding and stabilization element. The interval 79 to 152 (NVVASPEPEA…HTPVNENVEL (74 aa)) is disordered. Phosphoserine is present on Ser83. A compositionally biased stretch (basic and acidic residues) spans 93 to 111 (KSQEAEQKDVTQERVHSLE). Phosphoserine is present on residues Ser123 and Ser126. A compositionally biased stretch (polar residues) spans 138–147 (EGVTNHTPVN). The short motif at 189-195 (SEYQRQF) is the ST]-E-Y-X(3)-F motif 2; required for efficient microtubule binding and stabilization element. An ST]-E-Y-X(3)-F motif 3; required for efficient microtubule binding and stabilization motif is present at residues 232 to 238 (TEYKRNF). Ser242 and Ser263 each carry phosphoserine. The short motif at 306–312 (SEYRAKF) is the ST]-E-Y-X(3)-F motif 4; required for efficient microtubule binding and stabilization element. A Phosphoserine modification is found at Ser314. Residues 391 to 571 (DLAGDPTSHK…DCLETSKNDF (181 aa)) form a disordered region. Positions 460 to 469 (KEEEDDNEEE) are enriched in acidic residues. Over residues 482–501 (EQEKLDVREKSKADKMKEGS) the composition is skewed to basic and acidic residues. Phosphoserine is present on residues Ser560 and Ser584. Positions 616–637 (SKIPKYPTNPPGQLPSPPHVPS) are disordered. Residues 622 to 635 (PTNPPGQLPSPPHV) show a composition bias toward pro residues. At Ser648 the chain carries Phosphoserine.

Belongs to the MDM1 family.

Its subcellular location is the nucleus. The protein localises to the cytoplasm. It is found in the cytoskeleton. It localises to the microtubule organizing center. The protein resides in the centrosome. Its subcellular location is the centriole. Microtubule-binding protein that negatively regulates centriole duplication. Binds to and stabilizes microtubules. The chain is Nuclear protein MDM1 (MDM1) from Homo sapiens (Human).